We begin with the raw amino-acid sequence, 393 residues long: Succinate--CoA ligase [ADP-forming] subunit beta (393 aa).

The ATP-grasp domain occupies 9–242; the sequence is KELFAKHGVP…RAATDPLEWK (234 aa). ATP contacts are provided by residues lysine 45, 52-54, serine 94, and glutamate 99; that span reads GRG. Residues asparagine 191 and aspartate 211 each contribute to the Mg(2+) site. Residues asparagine 262 and 324 to 326 each bind substrate; that span reads GIT.

This sequence belongs to the succinate/malate CoA ligase beta subunit family. Heterotetramer of two alpha and two beta subunits. Mg(2+) is required as a cofactor.

The enzyme catalyses succinate + ATP + CoA = succinyl-CoA + ADP + phosphate. It catalyses the reaction GTP + succinate + CoA = succinyl-CoA + GDP + phosphate. It participates in carbohydrate metabolism; tricarboxylic acid cycle; succinate from succinyl-CoA (ligase route): step 1/1. Its function is as follows. Succinyl-CoA synthetase functions in the citric acid cycle (TCA), coupling the hydrolysis of succinyl-CoA to the synthesis of either ATP or GTP and thus represents the only step of substrate-level phosphorylation in the TCA. The beta subunit provides nucleotide specificity of the enzyme and binds the substrate succinate, while the binding sites for coenzyme A and phosphate are found in the alpha subunit. The polypeptide is Succinate--CoA ligase [ADP-forming] subunit beta (Mycobacterium leprae (strain Br4923)).